We begin with the raw amino-acid sequence, 631 residues long: Phosphomethylpyrimidine synthase (631 aa).

Residues Asn239, Met268, Tyr297, His333, 353 to 355 (SRG), 394 to 397 (DGLR), and Glu433 contribute to the substrate site. Residue His437 participates in Zn(2+) binding. Tyr460 provides a ligand contact to substrate. His501 provides a ligand contact to Zn(2+). 3 residues coordinate [4Fe-4S] cluster: Cys581, Cys584, and Cys589.

This sequence belongs to the ThiC family. In terms of assembly, homodimer. The cofactor is [4Fe-4S] cluster.

It carries out the reaction 5-amino-1-(5-phospho-beta-D-ribosyl)imidazole + S-adenosyl-L-methionine = 4-amino-2-methyl-5-(phosphooxymethyl)pyrimidine + CO + 5'-deoxyadenosine + formate + L-methionine + 3 H(+). It participates in cofactor biosynthesis; thiamine diphosphate biosynthesis. Functionally, catalyzes the synthesis of the hydroxymethylpyrimidine phosphate (HMP-P) moiety of thiamine from aminoimidazole ribotide (AIR) in a radical S-adenosyl-L-methionine (SAM)-dependent reaction. The polypeptide is Phosphomethylpyrimidine synthase (Salmonella paratyphi B (strain ATCC BAA-1250 / SPB7)).